A 236-amino-acid polypeptide reads, in one-letter code: Virion protein US10 homolog (236 aa).

The disordered stretch occupies residues M1–D32. A compositionally biased stretch (gly residues) spans S21–A31. A zinc finger spans residues C138–C150.

It belongs to the herpesviridae US10 family. Post-translationally, phosphorylated.

The protein resides in the virion tegument. Its subcellular location is the host nucleus matrix. The sequence is that of Virion protein US10 homolog (IR5) from Equine herpesvirus 1 (strain Kentucky A) (EHV-1).